Here is a 263-residue protein sequence, read N- to C-terminus: Small ribosomal subunit protein eS4 (263 aa).

An S4 RNA-binding domain is found at Leu-42 to Asp-104.

It belongs to the eukaryotic ribosomal protein eS4 family.

The protein is Small ribosomal subunit protein eS4 (RPS4) of Gallus gallus (Chicken).